Reading from the N-terminus, the 231-residue chain is NADH-ubiquinone oxidoreductase chain 4 (231 aa).

The next 6 helical transmembrane spans lie at 1 to 21 (PIAG…YGII), 34 to 54 (MFIP…LTCL), 63 to 85 (IAYS…TPWG), 89 to 111 (AMAL…NTTY), 128 to 148 (ILPM…AMPP), and 169 to 189 (TIIM…HMFL).

Belongs to the complex I subunit 4 family.

It localises to the mitochondrion membrane. The enzyme catalyses a ubiquinone + NADH + 5 H(+)(in) = a ubiquinol + NAD(+) + 4 H(+)(out). Its function is as follows. Core subunit of the mitochondrial membrane respiratory chain NADH dehydrogenase (Complex I) that is believed to belong to the minimal assembly required for catalysis. Complex I functions in the transfer of electrons from NADH to the respiratory chain. The immediate electron acceptor for the enzyme is believed to be ubiquinone. In Lachesis muta muta (Bushmaster), this protein is NADH-ubiquinone oxidoreductase chain 4 (MT-ND4).